A 115-amino-acid chain; its full sequence is Large ribosomal subunit protein bL20 (115 aa).

The protein belongs to the bacterial ribosomal protein bL20 family.

Its function is as follows. Binds directly to 23S ribosomal RNA and is necessary for the in vitro assembly process of the 50S ribosomal subunit. It is not involved in the protein synthesizing functions of that subunit. This chain is Large ribosomal subunit protein bL20, found in Malacoplasma penetrans (strain HF-2) (Mycoplasma penetrans).